Reading from the N-terminus, the 865-residue chain is NBPF family member NBPF11 (865 aa).

The stretch at 70 to 130 (MLRNERQFKE…RSLNEHLQAL (61 aa)) forms a coiled coil. Residues 161 to 200 (KLSPENDEDEDEDVQVEEDEKVLESSAPREVQKAEESKVP) are disordered. Over residues 165–181 (ENDEDEDEDVQVEEDEK) the composition is skewed to acidic residues. The Olduvai 1 domain maps to 165–259 (ENDEDEDEDV…GCQDALNILP (95 aa)). Residues 190–200 (EVQKAEESKVP) show a composition bias toward basic and acidic residues. A coiled-coil region spans residues 339-401 (KSMLRNERQF…RSLNEHLQAL (63 aa)). Olduvai domains are found at residues 436–528 (ENDN…HIIP), 529–617 (ENES…ATGP), 620–675 (SREL…VDMD), 676–767 (EIEK…PPCP), and 770–865 (SREL…SAAC). Disordered regions lie at residues 450–475 (AEKVQKSSSPREMQKAEEKEVPEDSL) and 520–567 (WEDA…GYST). Composition is skewed to acidic residues over residues 530–539 (NESDDEEEEE) and 550–562 (ESEEEEVPQESWD). Positions 829–865 (RGRGRKEGEEDQRRKEEGEEKKGKKIKTHHAPGSAAC) are disordered. A compositionally biased stretch (basic and acidic residues) spans 833-850 (RKEGEEDQRRKEEGEEKK).

Belongs to the NBPF family. As to expression, expressed in spinal cord.

The protein localises to the cytoplasm. This is NBPF family member NBPF11 from Homo sapiens (Human).